Consider the following 171-residue polypeptide: MNHFELFGLPSQFQLDGSLLSSKFRELQKRFHPDNFATASERDRLMSVQKAAQINDAYQVLKHPISRAEYILAEQGMEIRGEQQTMQDPMFLMEQMELREELEDIADCSDPESALFDFDSKVSKMYKQHLASVEQELNDGLWAEAADRVRKLKFIAKLKNEIELVEDKLLG.

The J domain maps to 2–74 (NHFELFGLPS…ISRAEYILAE (73 aa)).

The protein belongs to the HscB family. Interacts with HscA and stimulates its ATPase activity.

Functionally, co-chaperone involved in the maturation of iron-sulfur cluster-containing proteins. Seems to help targeting proteins to be folded toward HscA. The sequence is that of Co-chaperone protein HscB homolog from Vibrio parahaemolyticus serotype O3:K6 (strain RIMD 2210633).